The chain runs to 331 residues: (E)-beta farnesene synthase MBR_03882 (331 aa).

The protein belongs to the trichodiene synthase family.

The catalysed reaction is (2E,6E)-farnesyl diphosphate = (E)-beta-farnesene + diphosphate. In terms of biological role, terpene synthase that catalyzes the conversion of (2E,6E)-farnesyl diphosphate (FPP) into the volatile sesquiterpene (E)-beta-farnesene. The sequence is that of (E)-beta farnesene synthase MBR_03882 from Metarhizium brunneum (strain ARSEF 3297).